Reading from the N-terminus, the 502-residue chain is Glutamate--tRNA ligase (502 aa).

The 'HIGH' region signature appears at 9-19; that stretch reads PSPTGDPHVGT. Zn(2+)-binding residues include Cys-106, Cys-108, Cys-133, and His-135. A 'KMSKS' region motif is present at residues 250–254; the sequence is KLSKR. Position 253 (Lys-253) interacts with ATP.

Belongs to the class-I aminoacyl-tRNA synthetase family. Glutamate--tRNA ligase type 1 subfamily. Monomer. It depends on Zn(2+) as a cofactor.

The protein localises to the cytoplasm. The catalysed reaction is tRNA(Glu) + L-glutamate + ATP = L-glutamyl-tRNA(Glu) + AMP + diphosphate. Catalyzes the attachment of glutamate to tRNA(Glu) in a two-step reaction: glutamate is first activated by ATP to form Glu-AMP and then transferred to the acceptor end of tRNA(Glu). The polypeptide is Glutamate--tRNA ligase (Protochlamydia amoebophila (strain UWE25)).